Here is a 215-residue protein sequence, read N- to C-terminus: 3-demethoxyubiquinol 3-hydroxylase (215 aa).

The Fe cation site is built by Glu-64, Glu-94, His-97, Glu-146, Glu-178, and His-181.

Belongs to the COQ7 family. The cofactor is Fe cation.

It is found in the cell membrane. The catalysed reaction is a 5-methoxy-2-methyl-3-(all-trans-polyprenyl)benzene-1,4-diol + AH2 + O2 = a 3-demethylubiquinol + A + H2O. The protein operates within cofactor biosynthesis; ubiquinone biosynthesis. Its function is as follows. Catalyzes the hydroxylation of 2-nonaprenyl-3-methyl-6-methoxy-1,4-benzoquinol during ubiquinone biosynthesis. The sequence is that of 3-demethoxyubiquinol 3-hydroxylase from Pseudomonas paraeruginosa (strain DSM 24068 / PA7) (Pseudomonas aeruginosa (strain PA7)).